Reading from the N-terminus, the 51-residue chain is Large ribosomal subunit protein bL33 (51 aa).

The protein belongs to the bacterial ribosomal protein bL33 family.

This is Large ribosomal subunit protein bL33 from Hahella chejuensis (strain KCTC 2396).